A 190-amino-acid chain; its full sequence is Nucleoside triphosphate pyrophosphatase (190 aa).

Residue Asp69 is the Proton acceptor of the active site.

This sequence belongs to the Maf family. The cofactor is a divalent metal cation.

It is found in the cytoplasm. The catalysed reaction is a ribonucleoside 5'-triphosphate + H2O = a ribonucleoside 5'-phosphate + diphosphate + H(+). The enzyme catalyses a 2'-deoxyribonucleoside 5'-triphosphate + H2O = a 2'-deoxyribonucleoside 5'-phosphate + diphosphate + H(+). Nucleoside triphosphate pyrophosphatase. May have a dual role in cell division arrest and in preventing the incorporation of modified nucleotides into cellular nucleic acids. In Helicobacter pylori (strain ATCC 700392 / 26695) (Campylobacter pylori), this protein is Nucleoside triphosphate pyrophosphatase.